The sequence spans 311 residues: Tricarboxylate transport protein, mitochondrial (311 aa).

The propeptide at 1–13 is removed in mature form; that stretch reads MAAPRAPRALTAA. 3 Solcar repeats span residues 23–111, 122–208, and 218–303; these read THPG…LSNH, RRGL…LRNW, and MNPL…VVKL. 3 helical membrane passes run 29-46, 86-105, and 129-143; these read ILAG…TFPT, GLSS…FGMF, and LGAG…VCPM. Residue Ser156 is modified to Phosphoserine. Transmembrane regions (helical) follow at residues 183–202, 224–241, and 278–297; these read GLTA…FFVM, GVFG…NTPL, and GTVP…FVIY.

This sequence belongs to the mitochondrial carrier (TC 2.A.29) family. In terms of processing, possesses a short cleavable presequence, which, however, is found to be dispensable both for targeting to mitochondria and insertion into the inner membrane. However, the presequence is required to keep SLC25A1 in a soluble state and thus in an import-competent state. Mature SLC25A1 lacking the presequence is prone to aggregation.

Its subcellular location is the mitochondrion inner membrane. The enzyme catalyses (S)-malate(in) + citrate(out) = (S)-malate(out) + citrate(in). It catalyses the reaction citrate(out) + succinate(in) = citrate(in) + succinate(out). The catalysed reaction is D-threo-isocitrate(in) + citrate(out) = D-threo-isocitrate(out) + citrate(in). It carries out the reaction cis-aconitate(in) + citrate(out) = cis-aconitate(out) + citrate(in). The enzyme catalyses trans-aconitate(in) + citrate(out) = trans-aconitate(out) + citrate(in). It catalyses the reaction phosphoenolpyruvate(in) + citrate(out) = phosphoenolpyruvate(out) + citrate(in). The catalysed reaction is maleate(in) + citrate(out) = maleate(out) + citrate(in). Functionally, mitochondrial electroneutral antiporter that exports citrate from the mitochondria into the cytosol in exchange for malate. Also able to mediate the exchange of citrate for isocitrate, phosphoenolpyruvate, cis-aconitate and to a lesser extent trans-aconitate, maleate and succinate. In the cytoplasm, citrate plays important roles in fatty acid and sterol synthesis, regulation of glycolysis, protein acetylation, and other physiopathological processes. This chain is Tricarboxylate transport protein, mitochondrial (Slc25a1), found in Rattus norvegicus (Rat).